The sequence spans 470 residues: 3-isopropylmalate dehydratase large subunit (470 aa).

3 residues coordinate [4Fe-4S] cluster: Cys-348, Cys-409, and Cys-412.

This sequence belongs to the aconitase/IPM isomerase family. LeuC type 1 subfamily. As to quaternary structure, heterodimer of LeuC and LeuD. [4Fe-4S] cluster is required as a cofactor.

The enzyme catalyses (2R,3S)-3-isopropylmalate = (2S)-2-isopropylmalate. Its pathway is amino-acid biosynthesis; L-leucine biosynthesis; L-leucine from 3-methyl-2-oxobutanoate: step 2/4. Its function is as follows. Catalyzes the isomerization between 2-isopropylmalate and 3-isopropylmalate, via the formation of 2-isopropylmaleate. This chain is 3-isopropylmalate dehydratase large subunit, found in Thioalkalivibrio sulfidiphilus (strain HL-EbGR7).